The sequence spans 184 residues: dITP/XTP pyrophosphatase (184 aa).

5 to 10 (SSNRHK) contacts substrate. The Mg(2+) site is built by E33 and D62. Residue D62 is the Proton acceptor of the active site. Substrate-binding positions include S63, 136–139 (WGFD), K158, and 163–164 (HR).

It belongs to the HAM1 NTPase family. As to quaternary structure, homodimer. Mg(2+) is required as a cofactor.

The catalysed reaction is XTP + H2O = XMP + diphosphate + H(+). The enzyme catalyses dITP + H2O = dIMP + diphosphate + H(+). It catalyses the reaction ITP + H2O = IMP + diphosphate + H(+). In terms of biological role, pyrophosphatase that catalyzes the hydrolysis of nucleoside triphosphates to their monophosphate derivatives, with a high preference for the non-canonical purine nucleotides XTP (xanthosine triphosphate), dITP (deoxyinosine triphosphate) and ITP. Seems to function as a house-cleaning enzyme that removes non-canonical purine nucleotides from the nucleotide pool, thus preventing their incorporation into DNA/RNA and avoiding chromosomal lesions. This chain is dITP/XTP pyrophosphatase, found in Korarchaeum cryptofilum (strain OPF8).